The primary structure comprises 282 residues: tRNA (guanine-N(7)-)-methyltransferase (282 aa).

The tract at residues 1-29 (MPHAPAKRQKREEYKNALHEDESNAALPK) is disordered. The segment covering 10–22 (KREEYKNALHEDE) has biased composition (basic and acidic residues). S-adenosyl-L-methionine contacts are provided by residues Gly-104, 153-154 (NT), and Cys-173. The active site involves Asp-176. Residue 255–257 (TEE) participates in S-adenosyl-L-methionine binding.

It belongs to the class I-like SAM-binding methyltransferase superfamily. TrmB family. Forms a complex with TRM82.

It localises to the nucleus. The catalysed reaction is guanosine(46) in tRNA + S-adenosyl-L-methionine = N(7)-methylguanosine(46) in tRNA + S-adenosyl-L-homocysteine. Its pathway is tRNA modification; N(7)-methylguanine-tRNA biosynthesis. Its function is as follows. Catalyzes the formation of N(7)-methylguanine at position 46 (m7G46) in tRNA. This is tRNA (guanine-N(7)-)-methyltransferase from Phaeosphaeria nodorum (strain SN15 / ATCC MYA-4574 / FGSC 10173) (Glume blotch fungus).